Reading from the N-terminus, the 267-residue chain is 14-3-3-like protein GF14 chi (267 aa).

The residue at position 2 (alanine 2) is an N-acetylalanine. Phosphoserine is present on residues serine 72 and serine 195. Threonine 216 is subject to Phosphothreonine. A Phosphoserine modification is found at serine 267.

Belongs to the 14-3-3 family. Interacts with TPK1. Interacts with the isocitrate dehydrogenase IDH3, and malate dehydrogenases MDH1 and MDH2. Interacts with DREB1A and DREB1B in the nucleus. Interacts with CINV1.

The protein localises to the nucleus. It is found in the cytoplasm. Is associated with a DNA binding complex that binds to the G box, a well-characterized cis-acting DNA regulatory element found in plant genes. Involved in the regulation of nutrient metabolism. The sequence is that of 14-3-3-like protein GF14 chi (GRF1) from Arabidopsis thaliana (Mouse-ear cress).